Reading from the N-terminus, the 498-residue chain is Cyclin-L1 (498 aa).

2 cyclin-like regions span residues 68–169 (ERIQ…RILK) and 182–266 (KIIV…NTMK). Residues 294–498 (LKARGQNPNG…SGHSHSRHRR (205 aa)) are disordered. Positions 311 to 320 (NGFSPASKPS) are enriched in polar residues. Residues 321 to 341 (SPRDVKMDDKSPNSKLKEPEN) show a composition bias toward basic and acidic residues. An RS region spans residues 366–396 (KNHSRSRSRSTSRSPHRHRRSHSGTYSSHSS). A compositionally biased stretch (basic residues) spans 367–387 (NHSRSRSRSTSRSPHRHRRSH). A compositionally biased stretch (low complexity) spans 388 to 402 (SGTYSSHSSHSPSPR). Phosphoserine occurs at positions 409 and 412. Residues 415–426 (RTDRDRPSETSR) show a composition bias toward basic and acidic residues. Positions 427-440 (HSNKRRRSRSRSRS) are enriched in basic residues. Basic and acidic residues predominate over residues 441-478 (NSRERVRDRDHIKHKQERSGSGHHWDHRDRERDRSRDH). The segment covering 479 to 498 (GRNKRQSRSHSGHSHSRHRR) has biased composition (basic residues).

This sequence belongs to the cyclin family. Cyclin L subfamily.

Its subcellular location is the nucleus speckle. The protein localises to the nucleus. The protein resides in the nucleoplasm. Functionally, involved in pre-mRNA splicing. This Danio rerio (Zebrafish) protein is Cyclin-L1 (ccnl1).